A 171-amino-acid polypeptide reads, in one-letter code: Peptide deformylase (171 aa).

Fe cation-binding residues include cysteine 94 and histidine 136. Residue glutamate 137 is part of the active site. Histidine 140 is a binding site for Fe cation.

Belongs to the polypeptide deformylase family. Requires Fe(2+) as cofactor.

It catalyses the reaction N-terminal N-formyl-L-methionyl-[peptide] + H2O = N-terminal L-methionyl-[peptide] + formate. Removes the formyl group from the N-terminal Met of newly synthesized proteins. Requires at least a dipeptide for an efficient rate of reaction. N-terminal L-methionine is a prerequisite for activity but the enzyme has broad specificity at other positions. The sequence is that of Peptide deformylase from Afipia carboxidovorans (strain ATCC 49405 / DSM 1227 / KCTC 32145 / OM5) (Oligotropha carboxidovorans).